The following is a 215-amino-acid chain: High mobility group protein B1 (215 aa).

2–10 (GKGDPKKPR) lines the heparin pocket. Positions 2-97 (GKGDPKKPRG…KFKDPNAPKR (96 aa)) are sufficient for interaction with HAVCR2. N6-acetyllysine is present on residues Lys3, Lys7, Lys8, and Lys12. The segment at 3-15 (KGDPKKPRGKMSS) is LPS binding (delipidated). The HMG box 1 DNA-binding region spans 9–79 (PRGKMSSYAF…RYEREMKTYI (71 aa)). The residue at position 23 (Cys23) is a Cysteine sulfonic acid (-SO3H); alternate. A disulfide bond links Cys23 and Cys45. Positions 27–43 (HKKKHPDASVNFSEFSK) match the Nuclear localization signal (NLS) 1 motif. Lys28, Lys29, and Lys30 each carry N6-acetyllysine. An Isoglutamyl lysine isopeptide (Lys-Gln) (interchain with Q-?) cross-link involves residue Lys28. A Phosphoserine modification is found at Ser35. Lys43 bears the N6-acetyllysine mark. Residues Lys43 and Lys44 each participate in an isoglutamyl lysine isopeptide (Lys-Gln) (interchain with Q-?) cross-link. A Cysteine sulfonic acid (-SO3H); alternate modification is found at Cys45. Lys68 participates in a covalent cross-link: Isoglutamyl lysine isopeptide (Lys-Gln) (interchain with Q-?). The tract at residues 76–95 (KTYIPPKGETKKKFKDPNAP) is disordered. The tract at residues 80 to 96 (PPKGETKKKFKDPNAPK) is LPS binding (Lipid A). Residues 83–94 (GETKKKFKDPNA) are compositionally biased toward basic and acidic residues. The segment at 89-108 (FKDPNAPKRPPSAFFLFCSE) is cytokine-stimulating activity. The residue at position 90 (Lys90) is an N6-acetyllysine. Residues 95 to 163 (PKRPPSAFFL…KYEKDIAAYR (69 aa)) constitute a DNA-binding region (HMG box 2). Phosphoserine is present on Ser100. Cysteine sulfonic acid (-SO3H) is present on Cys106. N6-acetyllysine occurs at positions 127, 128, 141, 172, 173, 177, and 180. Residues 150 to 183 (KLKEKYEKDIAAYRAKGKPDAAKKGVVKAEKSKK) form a binding to AGER/RAGE region. Residues 161-179 (AYRAKGKPDAAKKGVVKAE) show a composition bias toward basic and acidic residues. A disordered region spans residues 161-215 (AYRAKGKPDAAKKGVVKAEKSKKKKEEEEDEEDEEDEEEEEDEEDEEEEEDDDDE). The Nuclear localization signal (NLS) 2 signature appears at 178-184 (AEKSKKK). Lys180 is covalently cross-linked (Isoglutamyl lysine isopeptide (Lys-Gln) (interchain with Q-?)). Ser181 is subject to ADP-ribosylserine. 4 positions are modified to N6-acetyllysine: Lys182, Lys183, Lys184, and Lys185. Isoglutamyl lysine isopeptide (Lys-Gln) (interchain with Q-?) cross-links involve residues Lys182, Lys183, and Lys184. Over residues 187-215 (EEEDEEDEEDEEEEEDEEDEEEEEDDDDE) the composition is skewed to acidic residues.

This sequence belongs to the HMGB family. Interacts (fully reduced HMGB1) with CXCL12; probably in a 1:2 ratio involving two molecules of CXCL12, each interacting with one HMG box of HMGB1; inhibited by glycyrrhizin. Associates with the TLR4:LY96 receptor complex. Component of the RAG complex composed of core components RAG1 and RAG2, and associated component HMGB1 or HMGB2. Interacts (in cytoplasm upon starvation) with BECN1; inhibits the interaction of BECN1 and BCL2 leading to promotion of autophagy. Interacts with KPNA1; involved in nuclear import. Interacts with AGER. Interacts with SREBF1, TLR2, TLR4, TLR9, PTPRZ1, APEX1, FEN1, POLB, TERT. Interacts with IL1B, MSH2, XPA, XPC, HNF1A, TP53. Interacts with CD24; the probable CD24:SIGLEC10 complex is proposed to inhibit HGMB1-mediated tissue damage immune response. Interacts with THBD; prevents HGMB1 interaction with ACER/RAGE and inhibits HGMB1 pro-inflammatory activity. Interacts with HAVCR2; impairs HMGB1 binding to B-DNA and likely HMGB1-mediated innate immune response. Interacts with XPO1; mediating nuclear export. Interacts with receptor RAGE/AGER. Post-translationally, phosphorylated at serine residues. Phosphorylation in both NLS regions is required for cytoplasmic translocation followed by secretion. In terms of processing, acetylated on multiple sites upon stimulation with LPS. Acetylation on lysine residues in the nuclear localization signals (NLS 1 and NLS 2) leads to cytoplasmic localization and subsequent secretion. Acetylation on Lys-3 results in preferential binding to DNA ends and impairs DNA bending activity. Reduction/oxidation of cysteine residues Cys-23, Cys-45 and Cys-106 and a possible intramolecular disulfide bond involving Cys-23 and Cys-45 give rise to different redox forms with specific functional activities in various cellular compartments: 1- fully reduced HMGB1 (HMGB1C23hC45hC106h), 2- disulfide HMGB1 (HMGB1C23-C45C106h) and 3- sulfonyl HMGB1 (HMGB1C23soC45soC106so). Post-translationally, poly-ADP-ribosylated by PARP1 when secreted following stimulation with LPS. In terms of processing, in vitro cleavage by CASP1 is liberating a HMG box 1-containing peptide which may mediate immunogenic activity; the peptide antagonizes apoptosis-induced immune tolerance. Can be proteolytically cleaved by a thrombin:thrombomodulin complex; reduces binding to heparin and pro-inflammatory activities. Forms covalent cross-links mediated by transglutaminase TGM2, between a glutamine and the epsilon-amino group of a lysine residue, forming homopolymers and heteropolymers.

The protein localises to the nucleus. Its subcellular location is the chromosome. It localises to the cytoplasm. It is found in the secreted. The protein resides in the cell membrane. The protein localises to the endosome. Its subcellular location is the endoplasmic reticulum-Golgi intermediate compartment. Its function is as follows. Multifunctional redox sensitive protein with various roles in different cellular compartments. In the nucleus is one of the major chromatin-associated non-histone proteins and acts as a DNA chaperone involved in replication, transcription, chromatin remodeling, V(D)J recombination, DNA repair and genome stability. Proposed to be an universal biosensor for nucleic acids. Promotes host inflammatory response to sterile and infectious signals and is involved in the coordination and integration of innate and adaptive immune responses. In the cytoplasm functions as a sensor and/or chaperone for immunogenic nucleic acids implicating the activation of TLR9-mediated immune responses, and mediates autophagy. Acts as a danger-associated molecular pattern (DAMP) molecule that amplifies immune responses during tissue injury. Released to the extracellular environment can bind DNA, nucleosomes, IL-1 beta, CXCL12, AGER isoform 2/sRAGE, lipopolysaccharide (LPS) and lipoteichoic acid (LTA), and activates cells through engagement of multiple surface receptors. In the extracellular compartment fully reduced HMGB1 (released by necrosis) acts as a chemokine, disulfide HMGB1 (actively secreted) as a cytokine, and sulfonyl HMGB1 (released from apoptotic cells) promotes immunological tolerance. Has proangiogenic activity. May be involved in platelet activation. Binds to phosphatidylserine and phosphatidylethanolamide. Bound to RAGE mediates signaling for neuronal outgrowth. May play a role in accumulation of expanded polyglutamine (polyQ) proteins. Nuclear functions are attributed to fully reduced HGMB1. Associates with chromatin and binds DNA with a preference to non-canonical DNA structures such as single-stranded DNA, DNA-containing cruciforms or bent structures, supercoiled DNA and ZDNA. Can bent DNA and enhance DNA flexibility by looping thus providing a mechanism to promote activities on various gene promoters by enhancing transcription factor binding and/or bringing distant regulatory sequences into close proximity. May be involved in nucleotide excision repair (NER), mismatch repair (MMR) and base excision repair (BER) pathways, and double strand break repair such as non-homologous end joining (NHEJ). Involved in V(D)J recombination by acting as a cofactor of the RAG complex: acts by stimulating cleavage and RAG protein binding at the 23 bp spacer of conserved recombination signal sequences (RSS). In vitro can displace histone H1 from highly bent DNA. Can restructure the canonical nucleosome leading to relaxation of structural constraints for transcription factor-binding. Enhances binding of sterol regulatory element-binding proteins (SREBPs) such as SREBF1 to their cognate DNA sequences and increases their transcriptional activities. Facilitates binding of TP53 to DNA. May be involved in mitochondrial quality control and autophagy in a transcription-dependent fashion implicating HSPB1. Can modulate the activity of the telomerase complex and may be involved in telomere maintenance. Functionally, in the cytoplasm proposed to dissociate the BECN1:BCL2 complex via competitive interaction with BECN1 leading to autophagy activation. Involved in oxidative stress-mediated autophagy. Can protect BECN1 and ATG5 from calpain-mediated cleavage and thus proposed to control their proautophagic and proapoptotic functions and to regulate the extent and severity of inflammation-associated cellular injury. In myeloid cells has a protective role against endotoxemia and bacterial infection by promoting autophagy. Involved in endosomal translocation and activation of TLR9 in response to CpG-DNA in macrophages. In terms of biological role, in the extracellular compartment (following either active secretion or passive release)involved in regulation of the inflammatory response. Fully reduced HGMB1 (which subsequently gets oxidized after release) in association with CXCL12 mediates the recruitment of inflammatory cells during the initial phase of tissue injury; the CXCL12:HMGB1 complex triggers CXCR4 homodimerization. Induces the migration of monocyte-derived immature dendritic cells and seems to regulate adhesive and migratory functions of neutrophils implicating AGER/RAGE and ITGAM. Can bind to various types of DNA and RNA including microbial unmethylated CpG-DNA to enhance the innate immune response to nucleic acids. Proposed to act in promiscuous DNA/RNA sensing which cooperates with subsequent discriminative sensing by specific pattern recognition receptors. Promotes extracellular DNA-induced AIM2 inflammasome activation implicating AGER/RAGE. Disulfide HMGB1 binds to transmembrane receptors, such as AGER/RAGE, TLR2, TLR4 and probably TREM1, thus activating their signal transduction pathways. Mediates the release of cytokines/chemokines such as TNF, IL-1, IL-6, IL-8, CCL2, CCL3, CCL4 and CXCL10. Promotes secretion of interferon-gamma by macrophage-stimulated natural killer (NK) cells in concert with other cytokines like IL-2 or IL-12. TLR4 is proposed to be the primary receptor promoting macrophage activation and signaling through TLR4 seems to implicate LY96/MD-2. In bacterial LPS- or LTA-mediated inflammatory responses binds to the endotoxins and transfers them to CD14 for signaling to the respective TLR4:LY96 and TLR2 complexes. Contributes to tumor proliferation by association with ACER/RAGE. Can bind to IL1-beta and signals through the IL1R1:IL1RAP receptor complex. Binding to class A CpG activates cytokine production in plasmacytoid dendritic cells implicating TLR9, MYD88 and AGER/RAGE and can activate autoreactive B cells. Via HMGB1-containing chromatin immune complexes may also promote B cell responses to endogenous TLR9 ligands through a B-cell receptor (BCR)-dependent and ACER/RAGE-independent mechanism. Inhibits phagocytosis of apoptotic cells by macrophages; the function is dependent on poly-ADP-ribosylation and involves binding to phosphatidylserine on the cell surface of apoptotic cells. In adaptive immunity may be involved in enhancing immunity through activation of effector T-cells and suppression of regulatory T (TReg) cells. In contrast, without implicating effector or regulatory T-cells, required for tumor infiltration and activation of T-cells expressing the lymphotoxin LTA:LTB heterotrimer thus promoting tumor malignant progression. Also reported to limit proliferation of T-cells. Released HMGB1:nucleosome complexes formed during apoptosis can signal through TLR2 to induce cytokine production. Involved in induction of immunological tolerance by apoptotic cells; its pro-inflammatory activities when released by apoptotic cells are neutralized by reactive oxygen species (ROS)-dependent oxidation specifically on Cys-106. During macrophage activation by activated lymphocyte-derived self apoptotic DNA (ALD-DNA) promotes recruitment of ALD-DNA to endosomes. This Bos taurus (Bovine) protein is High mobility group protein B1 (HMGB1).